Consider the following 127-residue polypeptide: Protein SPIRAL1-like 4 (127 aa).

The interval 1–127 is disordered; sequence MGKARGVNSG…FGSGPCGSDK (127 aa). Over residues 39–48 the composition is skewed to low complexity; sequence TTTTTTTTTT. Residue Ser80 is modified to Phosphoserine. Polar residues predominate over residues 80–94; it reads SPNNYYRSDGQNCGN.

The protein belongs to the SPIRAL1 family. Ubiquitous.

Its function is as follows. Acts redundantly with SPR1 in maintaining the cortical microtubules organization essential for anisotropic cell growth. The chain is Protein SPIRAL1-like 4 (SP1L4) from Arabidopsis thaliana (Mouse-ear cress).